The following is a 148-amino-acid chain: Hemoglobin subunit beta (148 aa).

The region spanning 3 to 148 (XWTDXERAAI…VVSALGRQYH (146 aa)) is the Globin domain. Heme b contacts are provided by His64 and His93.

Belongs to the globin family. In terms of assembly, heterotetramer of two alpha chains and two beta chains. As to expression, red blood cells.

Involved in oxygen transport from gills to the various peripheral tissues. The protein is Hemoglobin subunit beta (hbb) of Decapterus maruadsi (Japanese scad).